A 493-amino-acid chain; its full sequence is Chitinase 1 (493 aa).

An N-terminal signal peptide occupies residues 1–20; the sequence is MISCNILGITIAAFITSTLA. In terms of domain architecture, GH18 spans 27-318; the sequence is VNVMYYWGQN…HGSSAALGQA (292 aa). Glutamate 164 acts as the Proton donor in catalysis.

This sequence belongs to the glycosyl hydrolase 18 family. Chitinase class III subfamily.

It catalyses the reaction Random endo-hydrolysis of N-acetyl-beta-D-glucosaminide (1-&gt;4)-beta-linkages in chitin and chitodextrins.. The polypeptide is Chitinase 1 (CHI1) (Rhizopus niveus).